Consider the following 591-residue polypeptide: Aspartate--tRNA(Asp/Asn) ligase (591 aa).

Residue Glu176 participates in L-aspartate binding. Residues 200–203 are aspartate; that stretch reads QLFK. Arg222 provides a ligand contact to L-aspartate. ATP is bound by residues 222–224 and Gln231; that span reads RDE. L-aspartate is bound at residue His450. Glu484 is an ATP binding site. Arg491 is a binding site for L-aspartate. Position 536–539 (536–539) interacts with ATP; sequence GLDR.

The protein belongs to the class-II aminoacyl-tRNA synthetase family. Type 1 subfamily. Homodimer.

It is found in the cytoplasm. It carries out the reaction tRNA(Asx) + L-aspartate + ATP = L-aspartyl-tRNA(Asx) + AMP + diphosphate. Aspartyl-tRNA synthetase with relaxed tRNA specificity since it is able to aspartylate not only its cognate tRNA(Asp) but also tRNA(Asn). Reaction proceeds in two steps: L-aspartate is first activated by ATP to form Asp-AMP and then transferred to the acceptor end of tRNA(Asp/Asn). This is Aspartate--tRNA(Asp/Asn) ligase from Bacillus anthracis (strain CDC 684 / NRRL 3495).